A 154-amino-acid polypeptide reads, in one-letter code: Large ribosomal subunit protein eL24 (154 aa).

Positions Ala92–Arg154 are disordered. A compositionally biased stretch (basic and acidic residues) spans Gln96–Gly122. Residues Lys129 to Arg154 show a composition bias toward low complexity.

It belongs to the eukaryotic ribosomal protein eL24 family.

The protein is Large ribosomal subunit protein eL24 (RPL24) of Branchiostoma belcheri (Amphioxus).